A 460-amino-acid polypeptide reads, in one-letter code: tRNA modification GTPase MnmE (460 aa).

Residues Arg24, Glu81, and Lys121 each coordinate (6S)-5-formyl-5,6,7,8-tetrahydrofolate. The 167-residue stretch at 218–384 (GLVVAIAGPP…MVEALAGFAA (167 aa)) folds into the TrmE-type G domain. Residues 228 to 233 (NVGKST), 247 to 253 (SPHAGTT), and 272 to 275 (DTAG) contribute to the GTP site. Ser232 and Thr253 together coordinate Mg(2+). Lys460 is a binding site for (6S)-5-formyl-5,6,7,8-tetrahydrofolate.

It belongs to the TRAFAC class TrmE-Era-EngA-EngB-Septin-like GTPase superfamily. TrmE GTPase family. In terms of assembly, homodimer. Heterotetramer of two MnmE and two MnmG subunits. K(+) is required as a cofactor.

The protein resides in the cytoplasm. In terms of biological role, exhibits a very high intrinsic GTPase hydrolysis rate. Involved in the addition of a carboxymethylaminomethyl (cmnm) group at the wobble position (U34) of certain tRNAs, forming tRNA-cmnm(5)s(2)U34. This Rhodopseudomonas palustris (strain HaA2) protein is tRNA modification GTPase MnmE.